The primary structure comprises 118 residues: Small ribosomal subunit protein uS13 (118 aa).

Residues 94 to 118 form a disordered region; sequence GLPVRGQRTKTNARTRKGPRKPIRK.

Belongs to the universal ribosomal protein uS13 family. As to quaternary structure, part of the 30S ribosomal subunit. Forms a loose heterodimer with protein S19. Forms two bridges to the 50S subunit in the 70S ribosome.

In terms of biological role, located at the top of the head of the 30S subunit, it contacts several helices of the 16S rRNA. In the 70S ribosome it contacts the 23S rRNA (bridge B1a) and protein L5 of the 50S subunit (bridge B1b), connecting the 2 subunits; these bridges are implicated in subunit movement. Contacts the tRNAs in the A and P-sites. The sequence is that of Small ribosomal subunit protein uS13 from Pseudomonas aeruginosa (strain LESB58).